Consider the following 200-residue polypeptide: Dephospho-CoA kinase (200 aa).

The DPCK domain maps to 4–200 (VLALTGGIAT…QLLIKIKEEG (197 aa)). Residue 12 to 17 (ATGKST) participates in ATP binding.

This sequence belongs to the CoaE family.

Its subcellular location is the cytoplasm. The enzyme catalyses 3'-dephospho-CoA + ATP = ADP + CoA + H(+). The protein operates within cofactor biosynthesis; coenzyme A biosynthesis; CoA from (R)-pantothenate: step 5/5. Functionally, catalyzes the phosphorylation of the 3'-hydroxyl group of dephosphocoenzyme A to form coenzyme A. The chain is Dephospho-CoA kinase from Lactobacillus acidophilus (strain ATCC 700396 / NCK56 / N2 / NCFM).